Consider the following 331-residue polypeptide: MGGDNAPACVVEGVIDALRESGNRFEILLIGQEEKVAPLLQQYDTGALKLRFVHAPEVITMEDVPATAVKAKQESSLVRGLKLCKAKDADAFVSAGNTGAMMAASLFVLGRIPGVLRPTIYAYFPRLGEGLTNLVDVGANVDCKPENLVQFAEMLTIYQRYAAKIEQPVVGLLNIGEEEGKGPDYLKQAWKMLQKAHEEQKINFIGNIEGHDILAGKATIVVCDGLVGNTILKFGESIPHFLGAIFKPALEKLVKEGKLDQNSAVLAGQTFKGIFEPFDVEKFGGVPFLGVDGISIVGHGRSSARAIKNMIYMAEHMIEQRVNERIAKMLA.

It belongs to the PlsX family. As to quaternary structure, homodimer. Probably interacts with PlsY.

It is found in the cytoplasm. The enzyme catalyses a fatty acyl-[ACP] + phosphate = an acyl phosphate + holo-[ACP]. It participates in lipid metabolism; phospholipid metabolism. In terms of biological role, catalyzes the reversible formation of acyl-phosphate (acyl-PO(4)) from acyl-[acyl-carrier-protein] (acyl-ACP). This enzyme utilizes acyl-ACP as fatty acyl donor, but not acyl-CoA. The polypeptide is Phosphate acyltransferase (Chlorobaculum tepidum (strain ATCC 49652 / DSM 12025 / NBRC 103806 / TLS) (Chlorobium tepidum)).